The chain runs to 200 residues: Chromophore lyase CpcS/CpeS (200 aa).

This sequence belongs to the CpcS/CpeS biliprotein lyase family.

In terms of biological role, covalently attaches a chromophore to Cys residue(s) of phycobiliproteins. In Synechococcus sp. (strain WH8020), this protein is Chromophore lyase CpcS/CpeS.